The primary structure comprises 165 residues: uncharacterized protein (165 aa).

Positions 1 to 17 (MIRGFFLILLFLLLAFF) are cleaved as a signal peptide.

This is an uncharacterized protein from Aquifex aeolicus (strain VF5).